The sequence spans 392 residues: Probable glucan endo-1,6-beta-glucosidase B (392 aa).

A signal peptide spans 1 to 18 (MKVTRLAVLNTLATLTVA). N-linked (GlcNAc...) asparagine glycosylation occurs at N31. E220 functions as the Proton donor in the catalytic mechanism. E322 acts as the Nucleophile in catalysis.

The protein belongs to the glycosyl hydrolase 5 (cellulase A) family.

It localises to the secreted. The enzyme catalyses Random hydrolysis of (1-&gt;6)-linkages in (1-&gt;6)-beta-D-glucans.. In terms of biological role, beta-glucanases participate in the metabolism of beta-glucan, the main structural component of the cell wall. Acts on lutean, pustulan and 1,6-oligo-beta-D-glucosides. The polypeptide is Probable glucan endo-1,6-beta-glucosidase B (exgB) (Aspergillus flavus (strain ATCC 200026 / FGSC A1120 / IAM 13836 / NRRL 3357 / JCM 12722 / SRRC 167)).